Reading from the N-terminus, the 90-residue chain is DNA-binding protein HU-alpha (90 aa).

Belongs to the bacterial histone-like protein family. In terms of assembly, heterodimer of an alpha and a beta chain.

In terms of biological role, histone-like DNA-binding protein which is capable of wrapping DNA to stabilize it, and thus to prevent its denaturation under extreme environmental conditions. This chain is DNA-binding protein HU-alpha (hupA), found in Escherichia coli O157:H7.